The following is a 126-amino-acid chain: Glycine cleavage system H protein (126 aa).

The Lipoyl-binding domain occupies 22–104; the sequence is VATIGITEYA…YEKAWMVKVE (83 aa). At K63 the chain carries N6-lipoyllysine.

Belongs to the GcvH family. The glycine cleavage system is composed of four proteins: P, T, L and H. Requires (R)-lipoate as cofactor.

The glycine cleavage system catalyzes the degradation of glycine. The H protein shuttles the methylamine group of glycine from the P protein to the T protein. Functionally, is also involved in protein lipoylation via its role as an octanoyl/lipoyl carrier protein intermediate. This is Glycine cleavage system H protein from Staphylococcus aureus (strain JH1).